The chain runs to 159 residues: Ribosomal RNA large subunit methyltransferase H (159 aa).

S-adenosyl-L-methionine-binding positions include L76, G108, and 127–132 (LSRLTF).

Belongs to the RNA methyltransferase RlmH family. In terms of assembly, homodimer.

It is found in the cytoplasm. It carries out the reaction pseudouridine(1915) in 23S rRNA + S-adenosyl-L-methionine = N(3)-methylpseudouridine(1915) in 23S rRNA + S-adenosyl-L-homocysteine + H(+). Specifically methylates the pseudouridine at position 1915 (m3Psi1915) in 23S rRNA. The polypeptide is Ribosomal RNA large subunit methyltransferase H (Syntrophomonas wolfei subsp. wolfei (strain DSM 2245B / Goettingen)).